The sequence spans 207 residues: N-(5'-phosphoribosyl)anthranilate isomerase (207 aa).

Belongs to the TrpF family.

The catalysed reaction is N-(5-phospho-beta-D-ribosyl)anthranilate = 1-(2-carboxyphenylamino)-1-deoxy-D-ribulose 5-phosphate. It participates in amino-acid biosynthesis; L-tryptophan biosynthesis; L-tryptophan from chorismate: step 3/5. In Stutzerimonas stutzeri (strain A1501) (Pseudomonas stutzeri), this protein is N-(5'-phosphoribosyl)anthranilate isomerase.